The sequence spans 93 residues: Bacterial microcompartment shell protein PduA (93 aa).

One can recognise a BMC domain in the interval 5 to 89 (ALGMVETKGL…PHTDVEKILP (85 aa)).

Belongs to the bacterial microcompartments protein family. In terms of assembly, homohexamer with a central pore; Lys-26 and Arg-79 interactions are very important for hexamer symmetry. The hexamers pack against each other in arrays. Interacts individually with shell proteins PduB, PduB', PduJ, PduK, PduN and PduU. Modeling suggests PduC, PduD, PduE, PduL and PduP interact with a cleft formed by the C-terminal segments of 2 adjacent PduA subunits (on the BMC luminal side) in the hexamer.

The protein resides in the bacterial microcompartment. The protein operates within polyol metabolism; 1,2-propanediol degradation. Functionally, one of the major shell proteins of the bacterial microcompartment (BMC) dedicated to 1,2-propanediol (1,2-PD) degradation, probably important for metabolite diffusion into and out of the BMC. Overexpression of a C-terminally mutated form (PduA*) makes thin parallel filaments with a honeycomb-like assembly in cross-section that probably form nanotubes. The filaments interfere with septation. PduA is probably the hub for binding multiple enzymes to the interior of the BMC. At least one of PduA or PduJ is required for BMC assembly; it must be encoded as the first gene in the pdu operon. In terms of biological role, expression of a cosmid containing the full 21-gene pdu operon in E.coli allows E.coli to grow on 1,2-PD with the appearance of BMCs in its cytoplasm. Overexpression of this protein leads to aberrant intracellular filaments. Its function is as follows. The 1,2-PD-specific bacterial microcompartment (BMC) concentrates low levels of 1,2-PD catabolic enzymes, concentrates volatile reaction intermediates thus enhancing pathway flux and keeps the level of toxic, mutagenic propionaldehyde low. This Citrobacter freundii protein is Bacterial microcompartment shell protein PduA.